The chain runs to 203 residues: Proteasome subunit beta 2 (203 aa).

The propeptide at 1-9 is removed in mature form; by autocatalysis; that stretch reads MGEEVQIGA. The Nucleophile role is filled by threonine 10.

It belongs to the peptidase T1B family. In terms of assembly, the 20S proteasome core is composed of 14 alpha and 14 beta subunits that assemble into four stacked heptameric rings, resulting in a barrel-shaped structure. The two inner rings, each composed of seven catalytic beta subunits, are sandwiched by two outer rings, each composed of seven alpha subunits. The catalytic chamber with the active sites is on the inside of the barrel. Has a gated structure, the ends of the cylinder being occluded by the N-termini of the alpha-subunits. Is capped at one or both ends by the proteasome regulatory ATPase, PAN.

Its subcellular location is the cytoplasm. The enzyme catalyses Cleavage of peptide bonds with very broad specificity.. Its activity is regulated as follows. The formation of the proteasomal ATPase PAN-20S proteasome complex, via the docking of the C-termini of PAN into the intersubunit pockets in the alpha-rings, triggers opening of the gate for substrate entry. Interconversion between the open-gate and close-gate conformations leads to a dynamic regulation of the 20S proteasome proteolysis activity. In terms of biological role, component of the proteasome core, a large protease complex with broad specificity involved in protein degradation. The polypeptide is Proteasome subunit beta 2 (Pyrobaculum arsenaticum (strain DSM 13514 / JCM 11321 / PZ6)).